Reading from the N-terminus, the 412-residue chain is Imidazolonepropionase (412 aa).

Fe(3+)-binding residues include His-76 and His-78. 2 residues coordinate Zn(2+): His-76 and His-78. 4-imidazolone-5-propanoate is bound by residues Arg-85, Tyr-148, and His-181. Tyr-148 contributes to the N-formimidoyl-L-glutamate binding site. His-242 contacts Fe(3+). Residue His-242 participates in Zn(2+) binding. Glu-245 is a binding site for 4-imidazolone-5-propanoate. Position 317 (Asp-317) interacts with Fe(3+). Asp-317 is a Zn(2+) binding site. Positions 319 and 321 each coordinate N-formimidoyl-L-glutamate. Ser-322 is a 4-imidazolone-5-propanoate binding site.

It belongs to the metallo-dependent hydrolases superfamily. HutI family. It depends on Zn(2+) as a cofactor. Fe(3+) is required as a cofactor.

It localises to the cytoplasm. It catalyses the reaction 4-imidazolone-5-propanoate + H2O = N-formimidoyl-L-glutamate. Its pathway is amino-acid degradation; L-histidine degradation into L-glutamate; N-formimidoyl-L-glutamate from L-histidine: step 3/3. In terms of biological role, catalyzes the hydrolytic cleavage of the carbon-nitrogen bond in imidazolone-5-propanoate to yield N-formimidoyl-L-glutamate. It is the third step in the universal histidine degradation pathway. This Staphylococcus aureus (strain Mu50 / ATCC 700699) protein is Imidazolonepropionase.